A 3198-amino-acid polypeptide reads, in one-letter code: Helicase domino (3198 aa).

The span at 1–12 shows a compositional bias: gly residues; the sequence is MNEGNSAGGGHE. Disordered stretches follow at residues 1 to 27, 93 to 112, and 119 to 148; these read MNEG…RVTP, LPQQ…APAH, and SSTI…AASI. Basic and acidic residues predominate over residues 134 to 143; the sequence is QRLDDNEDRT. Positions 187–212 form a coiled coil; it reads KKRILQQKLQILRNLKERHLENVSEY. Disordered stretches follow at residues 256 to 350 and 391 to 474; these read TSAA…SATS and GGTP…TPNS. Polar residues-rich tracts occupy residues 264–281 and 297–329; these read QNQK…SSLV and NISN…TESN. Over residues 330-350 the composition is skewed to low complexity; that stretch reads SSTTVPGTATSGAATSTSATS. Residues 391-404 are compositionally biased toward polar residues; the sequence is GGTPLLPCNTSAGS. Low complexity predominate over residues 452–464; it reads PGTPTSGSLLSPA. One can recognise an HSA domain in the interval 507–579; that stretch reads LPKLQEPSRP…QELQLKRVAS (73 aa). Residues 635–848 are disordered; that stretch reads NKSVADTPSL…DMEEQDEQED (214 aa). Over residues 638–650 the composition is skewed to polar residues; the sequence is VADTPSLNSSRLT. Residues 652-664 are compositionally biased toward basic and acidic residues; the sequence is PKRESDDDFRPES. 3 positions are modified to phosphoserine: S656, S664, and S666. A coiled-coil region spans residues 666–696; the sequence is SEDDEETIAKAEEDAADVKEEVTALAKESEM. Basic and acidic residues-rich tracts occupy residues 672–695 and 711–721; these read TIAK…KESE and ENRDKLMKEEQ. Phosphothreonine is present on T729. 3 positions are modified to phosphoserine: S733, S736, and S744. Residues 741–784 are a coiled coil; the sequence is KEASDDDENTISKQEEAEQEIDHKKEIDELEADNDLSVEQLLAK. A compositionally biased stretch (basic and acidic residues) spans 753–767; it reads KQEEAEQEIDHKKEI. The segment covering 805 to 831 has biased composition (acidic residues); sequence LDSDDDSTAVDSTEESEDAATEDEEDL. T838 is modified (phosphothreonine). Positions 926-1091 constitute a Helicase ATP-binding domain; that stretch reads VTMNERKLNG…WSLMHFLMPY (166 aa). Residue 939 to 946 coordinates ATP; that stretch reads DEMGLGKT. A disordered region spans residues 1471–1492; the sequence is VQKQSIANGKTEPEEETEAEDP. The region spanning 1662–1812 is the Helicase C-terminal domain; it reads TMDRLLRQLK…DMAIEGGNFT (151 aa). A disordered region spans residues 1828 to 1856; the sequence is EQSEQDESSQEKSENKDRIVATTTLSDTP. Residues 1836 to 1846 show a composition bias toward basic and acidic residues; the sequence is SQEKSENKDRI. The stretch at 1951-1996 forms a coiled coil; it reads AAWTAEQLRAAEAELEAQKREWEANRLAAMHKEEELLKQETEAEEM. The disordered stretch occupies residues 2061–2100; it reads KEHKRSRTDAGYDGSRRPNKMRREDNYVPPRSLFDRPTPQ. Positions 2067–2086 are enriched in basic and acidic residues; sequence RTDAGYDGSRRPNKMRREDN. One can recognise a Myb-like domain in the interval 2136–2205; it reads TEPEAMAEWC…QCRWRYETHI (70 aa). A disordered region spans residues 2318 to 2362; sequence IREKQRGQQMSQPPVGVGVVQQMQQQSQQQQQPAPPPLPQQQQPQ. Residues 2325 to 2349 show a composition bias toward low complexity; sequence QQMSQPPVGVGVVQQMQQQSQQQQQ.

It belongs to the SNF2/RAD54 helicase family. SWR1 subfamily. In terms of assembly, component of the Tip60 chromatin-remodeling complex which contains Domino, Tip60, Tra1, Brd8, E(Pc), DMAP1, Pontin, Reptin, Ing3, Act87E, BAP55, Mrg15, MrgBP, Gas41 and YL-1. In terms of tissue distribution, isoform B is present at high levels in ovary, in follicle cells, nurse cells and oocyte. Isoform B is also present in germline and somatic stem cells from the germarium. Isoform A is undetectable in adult ovary (at protein level).

It is found in the nucleus. In terms of biological role, mediates the ATP-dependent exchange of unmodified histone H2AV for its phosphorylated and acetylated form H2AVK5acS138ph, leading to transcriptional regulation of selected genes by chromatin remodeling. Involved in Notch signaling. Represses E2F target genes. Required for somatic stem cell self-renewal but not for germline stem cell self-renewal. Involved in oogenesis. This Drosophila melanogaster (Fruit fly) protein is Helicase domino (dom).